The primary structure comprises 294 residues: Glycine--tRNA ligase alpha subunit (294 aa).

This sequence belongs to the class-II aminoacyl-tRNA synthetase family. In terms of assembly, tetramer of two alpha and two beta subunits.

It is found in the cytoplasm. The enzyme catalyses tRNA(Gly) + glycine + ATP = glycyl-tRNA(Gly) + AMP + diphosphate. The chain is Glycine--tRNA ligase alpha subunit from Nostoc sp. (strain PCC 7120 / SAG 25.82 / UTEX 2576).